A 227-amino-acid chain; its full sequence is UPF0758 protein CPE2144 (227 aa).

Residues 105–227 (KISKPSDVAK…FISLKEKDIL (123 aa)) enclose the MPN domain. The Zn(2+) site is built by His176, His178, and Asp189. The JAMM motif signature appears at 176–189 (HNHPSGDPTPSRDD).

The protein belongs to the UPF0758 family.

The chain is UPF0758 protein CPE2144 from Clostridium perfringens (strain 13 / Type A).